A 378-amino-acid polypeptide reads, in one-letter code: Cytochrome b (378 aa).

4 helical membrane passes run 34-54 (FGSL…FLAM), 78-99 (WFLR…FMHV), 114-134 (WNTG…GYVL), and 179-199 (FFTF…IHLL). Residues His84 and His98 each contribute to the heme b site. His183 and His197 together coordinate heme b. A ubiquinone is bound at residue His202. A run of 4 helical transmembrane segments spans residues 227-247 (YKDI…IWKF), 289-309 (LGGV…PFTH), 321-341 (LNQI…WIGA), and 348-368 (YVLT…INPL).

The protein belongs to the cytochrome b family. In terms of assembly, the main subunits of complex b-c1 are: cytochrome b, cytochrome c1 and the Rieske protein. Heme b serves as cofactor.

The protein resides in the mitochondrion inner membrane. In terms of biological role, component of the ubiquinol-cytochrome c reductase complex (complex III or cytochrome b-c1 complex) that is part of the mitochondrial respiratory chain. The b-c1 complex mediates electron transfer from ubiquinol to cytochrome c. Contributes to the generation of a proton gradient across the mitochondrial membrane that is then used for ATP synthesis. This chain is Cytochrome b (MT-CYB), found in Anopheles quadrimaculatus (Common malaria mosquito).